The primary structure comprises 1169 residues: Flocculation protein FLO10 (1169 aa).

Residues 1–24 (MPVAARYIFLTGLFLLSVANVALG) form the signal peptide. Positions 111–271 (PVKRGVKLCS…GTEVNDDFEG (161 aa)) constitute a PA14 domain. Residues N122, N157, and N279 are each glycosylated (N-linked (GlcNAc...) asparagine). 10 consecutive repeat copies span residues 303 to 326 (SSWSSSEVCTECTETESTSYVTPY), 330 to 356 (SSWSSSEVCTECTETESTSTSTPYVTS), 357 to 383 (SSSSSSEVCTECTETESTSYVTPYVSS), 384 to 419 (STAAANYTSSFSSSSEVCTECTETESTSTSTPYVTS), 420 to 446 (SSWSSSEVCTECTETESTSYVTPYVSS), 447 to 482 (STAAANYTSSFSSSSEVCTECTETESTSTSTPYVTS), 483 to 509 (SSSSSSEVCTECTETESTSYVTPYVSS), 510 to 545 (STAAANYTSSFSSSSEVCTECTETESTSTSTPYVTS), 546 to 572 (SSWSSSEVCTECTETESTSYVTPYVSS), and 573 to 608 (STAAANYTSSFSSSSEVCTECTETESTSTSTPYATS). Positions 303-572 (SSWSSSEVCT…TSYVTPYVSS (270 aa)) are 6 X 27 AA approximate repeats, Ser/Thr-rich. Positions 384–608 (STAAANYTSS…TSTSTPYATS (225 aa)) are 4 X 36 AA approximate repeats, Ser/Thr-rich. N389 is a glycosylation site (N-linked (GlcNAc...) asparagine). The N-linked (GlcNAc...) asparagine glycan is linked to N452. A glycan (N-linked (GlcNAc...) asparagine) is linked at N515. N-linked (GlcNAc...) asparagine glycans are attached at residues N578, N656, and N686. Positions 798 to 819 (TKVSSSESSESHRTSPTTSSES) are enriched in low complexity. Disordered stretches follow at residues 798 to 837 (TKVSSSESSESHRTSPTTSSESGIKSSGVEIESTSTSSFS), 856 to 920 (TPSS…SRDR), and 1070 to 1107 (RNNNFVPTSGTTSIETHTTTTSNASENSDNVSASEAVS). Residues 856–884 (TPSSPISTVAPRSTGLNSQTESTNSSKET) show a composition bias toward polar residues. Residue N879 is glycosylated (N-linked (GlcNAc...) asparagine). Over residues 886-902 (SSENSASVMPSSSATSP) the composition is skewed to low complexity. Over residues 906–916 (KVTSDETSSGF) the composition is skewed to polar residues. The segment covering 1077–1107 (TSGTTSIETHTTTTSNASENSDNVSASEAVS) has biased composition (low complexity). 2 N-linked (GlcNAc...) asparagine glycosylation sites follow: N1092 and N1099. The GPI-anchor amidated glycine moiety is linked to residue G1146. Residues 1147 to 1169 (IANHLLTNSGISIFIASLLLAIV) constitute a propeptide, removed in mature form.

The protein belongs to the flocculin family. Post-translationally, extensively O-glycosylated. In terms of processing, the GPI-anchor is attached to the protein in the endoplasmic reticulum and serves to target the protein to the cell surface. There, the glucosamine-inositol phospholipid moiety is cleaved off and the GPI-modified mannoprotein is covalently attached via its lipidless GPI glycan remnant to the 1,6-beta-glucan of the outer cell wall layer.

The protein resides in the secreted. It localises to the cell wall. Its subcellular location is the membrane. Functionally, cell wall protein that participates directly in adhesive cell-cell interactions during yeast flocculation, a reversible, asexual and Ca(2+)-dependent process in which cells adhere to form aggregates (flocs) consisting of thousands of cells. The lectin-like protein sticks out of the cell wall of flocculent cells and selectively binds mannose residues in the cell walls of adjacent cells. Activity is inhibited by mannose, glucose, maltose and sucrose. Also involved in cell-substrate adhesion, haploid invasive growth and diploid pseudohyphae formation. The chain is Flocculation protein FLO10 (FLO10) from Saccharomyces cerevisiae (strain ATCC 204508 / S288c) (Baker's yeast).